We begin with the raw amino-acid sequence, 873 residues long: Aminopeptidase M1-D (873 aa).

A required for membrane association region spans residues 96–203; it reads LGEGVLAMRF…MSTYLVAIVV (108 aa). Residues Glu136 and 269–273 each bind substrate; that span reads GAMEN. Zn(2+) is bound at residue His305. Glu306 serves as the catalytic Proton acceptor. His309 and Glu328 together coordinate Zn(2+). The Dileucine internalization motif motif lies at 721 to 722; the sequence is LL.

This sequence belongs to the peptidase M1 family. As to quaternary structure, homodimer. It depends on Zn(2+) as a cofactor.

It localises to the membrane. Its subcellular location is the microsome membrane. The protein resides in the cytoplasm. The catalysed reaction is Release of an N-terminal amino acid, Xaa-|-Yaa- from a peptide, amide or arylamide. Xaa is preferably Ala, but may be most amino acids including Pro (slow action). When a terminal hydrophobic residue is followed by a prolyl residue, the two may be released as an intact Xaa-Pro dipeptide.. This is Aminopeptidase M1-D from Oryza sativa subsp. japonica (Rice).